A 231-amino-acid chain; its full sequence is Small ribosomal subunit protein uS3 (231 aa).

In terms of domain architecture, KH type-2 spans 39–107; the sequence is IRKFIMKTLP…GVSLNIVEIR (69 aa).

It belongs to the universal ribosomal protein uS3 family. In terms of assembly, part of the 30S ribosomal subunit. Forms a tight complex with proteins S10 and S14.

Functionally, binds the lower part of the 30S subunit head. Binds mRNA in the 70S ribosome, positioning it for translation. This chain is Small ribosomal subunit protein uS3, found in Zymomonas mobilis subsp. mobilis (strain ATCC 31821 / ZM4 / CP4).